The primary structure comprises 570 residues: Sulfite reductase [NADPH] hemoprotein beta-component (570 aa).

4 residues coordinate [4Fe-4S] cluster: Cys434, Cys440, Cys479, and Cys483. Residue Cys483 participates in siroheme binding.

This sequence belongs to the nitrite and sulfite reductase 4Fe-4S domain family. As to quaternary structure, alpha(8)-beta(8). The alpha component is a flavoprotein, the beta component is a hemoprotein. Siroheme is required as a cofactor. [4Fe-4S] cluster serves as cofactor.

The enzyme catalyses hydrogen sulfide + 3 NADP(+) + 3 H2O = sulfite + 3 NADPH + 4 H(+). It participates in sulfur metabolism; hydrogen sulfide biosynthesis; hydrogen sulfide from sulfite (NADPH route): step 1/1. Component of the sulfite reductase complex that catalyzes the 6-electron reduction of sulfite to sulfide. This is one of several activities required for the biosynthesis of L-cysteine from sulfate. In Salmonella paratyphi B (strain ATCC BAA-1250 / SPB7), this protein is Sulfite reductase [NADPH] hemoprotein beta-component.